Consider the following 137-residue polypeptide: Small heat shock protein IbpA (137 aa).

The 110-residue stretch at 28 to 137 (SQGNGGYPPY…TLKPRRIEIK (110 aa)) folds into the sHSP domain.

It belongs to the small heat shock protein (HSP20) family. In terms of assembly, monomer. Forms homomultimers of about 100-150 subunits at optimal growth temperatures. Conformation changes to monomers at high temperatures or high ionic concentrations.

It is found in the cytoplasm. Associates with aggregated proteins, together with IbpB, to stabilize and protect them from irreversible denaturation and extensive proteolysis during heat shock and oxidative stress. Aggregated proteins bound to the IbpAB complex are more efficiently refolded and reactivated by the ATP-dependent chaperone systems ClpB and DnaK/DnaJ/GrpE. Its activity is ATP-independent. This is Small heat shock protein IbpA from Serratia proteamaculans (strain 568).